The primary structure comprises 1392 residues: Leucine-rich PPR motif-containing protein, mitochondrial (1392 aa).

The N-terminal 77 residues, 1-77, are a transit peptide targeting the mitochondrion; sequence MSALLRPARW…LPEEPAPVRR (77 aa). 14 PPR repeats span residues 125 to 159, 160 to 194, 195 to 229, 230 to 264, 265 to 299, 300 to 334, 402 to 436, 437 to 471, 677 to 708, 709 to 745, 746 to 783, 784 to 820, 821 to 856, and 953 to 987; these read LLRS…GTVY, DVSH…NIQP, NRVT…DLPI, TEAV…GIEP, GPDT…DHYF, MDRD…RRSI, HSSS…GFPI, RTHY…GVDP, VGDP…ESDM, VIGG…SAVL, DTAK…IKDA, AVLS…AKPS, SNIS…VLPR, and RDQM…NLIP. N6-acetyllysine is present on residues K151 and K186. K291 carries the N6-acetyllysine modification. K462 is modified (N6-acetyllysine). N6-acetyllysine is present on K749. S1025, S1026, and S1028 each carry phosphoserine. PPR repeat units lie at residues 1030–1064, 1065–1101, 1102–1136, 1137–1173, 1174–1208, and 1315–1349; these read GDTV…DVVF, SSEA…GFTL, NGAA…EQVP, SELA…IELS, RMVF…ENQT, and NDRV…NMKL. Position 1137 is a phosphoserine (S1137).

As to quaternary structure, component of mRNP complexes associated with HNRPA1. Component of the complex, at least composed of LRPPRC, BECN1 and BCL2; the interactions prevent BECN1 from forming an autophagy-inducing complex with PIK3C3. Interacts with CECR2, HEBP2, MAP1S, UXT, PPARGC1A and FOXO1. Interacts (via N-terminus) with EIF4E; the interaction promotes association of EIF4E with 4ESE-containing mRNAs. Interacts with exportin XPO1/CRM1; interacts both alone and in complex with EIF4E and 4ESE-containing mRNAs to form an EIF4E-dependent mRNA export complex. Interacts with importin IPO8; the interaction occurs when LRPPRC is in its RNA-free form and returns LRPPRC to the nucleus for further export rounds. Interacts with BECN1. Widely expressed. Expressed in liver, brain and a subset of small diameter sensory neurons in the dorsal root ganglion (at protein level).

It is found in the mitochondrion. It localises to the nucleus. The protein localises to the nucleoplasm. Its subcellular location is the nucleus inner membrane. The protein resides in the nucleus outer membrane. In terms of biological role, may play a role in RNA metabolism in both nuclei and mitochondria. In the nucleus binds to HNRPA1-associated poly(A) mRNAs and is part of nmRNP complexes at late stages of mRNA maturation which are possibly associated with nuclear mRNA export. Positively modulates nuclear export of mRNAs containing the EIF4E sensitivity element (4ESE) by binding simultaneously to both EIF4E and the 4ESE and acting as a platform for assembly for the RNA export complex. Also binds to exportin XPO1/CRM1 to engage the nuclear pore and traffic the bound mRNAs to the cytoplasm. May bind mature mRNA in the nucleus outer membrane. In mitochondria binds to poly(A) mRNA. Plays a role in translation or stability of mitochondrially encoded cytochrome c oxidase (COX) subunits. May be involved in transcription regulation. Cooperates with PPARGC1A to regulate certain mitochondrially encoded genes and gluconeogenic genes and may regulate docking of PPARGC1A to transcription factors. Seems to be involved in the transcription regulation of the multidrug-related genes MDR1 and MVP. Part of a nuclear factor that binds to the invMED1 element of MDR1 and MVP gene promoters. Binds single-stranded DNA. Required for maintaining mitochondrial potential. Suppresses the initiation of basal levels of autophagy and mitophagy by sustaining BCL2 levels. This is Leucine-rich PPR motif-containing protein, mitochondrial (Lrpprc) from Rattus norvegicus (Rat).